A 370-amino-acid chain; its full sequence is Alanine racemase (370 aa).

Lysine 36 serves as the catalytic Proton acceptor; specific for D-alanine. Lysine 36 carries the post-translational modification N6-(pyridoxal phosphate)lysine. A substrate-binding site is contributed by arginine 134. Catalysis depends on tyrosine 265, which acts as the Proton acceptor; specific for L-alanine. Residue methionine 313 participates in substrate binding.

Belongs to the alanine racemase family. Pyridoxal 5'-phosphate is required as a cofactor.

The catalysed reaction is L-alanine = D-alanine. It functions in the pathway amino-acid biosynthesis; D-alanine biosynthesis; D-alanine from L-alanine: step 1/1. In terms of biological role, catalyzes the interconversion of L-alanine and D-alanine. May also act on other amino acids. In Desulforamulus reducens (strain ATCC BAA-1160 / DSM 100696 / MI-1) (Desulfotomaculum reducens), this protein is Alanine racemase (alr).